A 447-amino-acid chain; its full sequence is ATP-dependent protease ATPase subunit HslU (447 aa).

ATP contacts are provided by residues I17, 59-64, D256, E321, and R393; that span reads GVGKTE.

The protein belongs to the ClpX chaperone family. HslU subfamily. In terms of assembly, a double ring-shaped homohexamer of HslV is capped on each side by a ring-shaped HslU homohexamer. The assembly of the HslU/HslV complex is dependent on binding of ATP.

It is found in the cytoplasm. Functionally, ATPase subunit of a proteasome-like degradation complex; this subunit has chaperone activity. The binding of ATP and its subsequent hydrolysis by HslU are essential for unfolding of protein substrates subsequently hydrolyzed by HslV. HslU recognizes the N-terminal part of its protein substrates and unfolds these before they are guided to HslV for hydrolysis. The polypeptide is ATP-dependent protease ATPase subunit HslU (Pseudomonas putida (strain W619)).